The chain runs to 387 residues: Oxidase FUB9 (387 aa).

Residues 1 to 20 (MSRTNLPIQPAKMSDATSSK) form a disordered region. Positions 18-379 (SSKPQIFSIQ…TPAHLSILNA (362 aa)) constitute an FMN hydroxy acid dehydrogenase domain. Tyr-44 contributes to the a 2-oxocarboxylate binding site. Positions 126, 150, and 178 each coordinate FMN. Arg-187 is an a 2-oxocarboxylate binding site. An FMN-binding site is contributed by Lys-250. His-274 functions as the Proton acceptor in the catalytic mechanism. Arg-277 contacts a 2-oxocarboxylate. Residues 305 to 309 (DGGFR) and 328 to 329 (GR) contribute to the FMN site.

Belongs to the FMN-dependent alpha-hydroxy acid dehydrogenase family. FMN serves as cofactor.

Its pathway is mycotoxin biosynthesis. Functionally, oxidase; part of the gene cluster that mediates the biosynthesis of fusaric acid, a mycotoxin with low to moderate toxicity to animals and humans, but with high phytotoxic properties. L-aspartate is suggested as fusaric acid amino acid precursor that is activated and further processed to O-acetyl-L-homoserine by cluster enzymes aspartate kinase FUB3 and homoserine O-acetyltransferase FUB5, as well as enzymes of the primary metabolism. The polyketide synthase (PKS) FUB1 generates the triketide trans-2-hexenal which is presumptively released by the hydrolase FUB4 and linked to the NRPS-bound amino acid precursor by NAD(P)-dependent dehydrogenase FUB6. FUB1, FUB4, and the non-canonical NRPS Fub8 may form an enzyme complex. Further processing of the NRPS-bound intermediate might be carried out by FUB6 and the sulfhydrylase FUB7, enabling a spontaneous electrocyclization to close the carbon backbone of fusaric acid. Dihydrofusaric acid is likely to be released via reduction by the thioester reductase (TR) domain of FUB8 whereupon the final oxidation to fusaric acid may (also) be performed by the FMN-dependent dehydrogenase FUB9. The chain is Oxidase FUB9 from Fusarium oxysporum f. sp. lycopersici (strain 4287 / CBS 123668 / FGSC 9935 / NRRL 34936) (Fusarium vascular wilt of tomato).